The chain runs to 275 residues: 4-diphosphocytidyl-2-C-methyl-D-erythritol kinase (275 aa).

The active site involves lysine 14. 98–108 (PMGAGLGGGSS) contacts ATP. Aspartate 140 is an active-site residue.

The protein belongs to the GHMP kinase family. IspE subfamily.

It carries out the reaction 4-CDP-2-C-methyl-D-erythritol + ATP = 4-CDP-2-C-methyl-D-erythritol 2-phosphate + ADP + H(+). It functions in the pathway isoprenoid biosynthesis; isopentenyl diphosphate biosynthesis via DXP pathway; isopentenyl diphosphate from 1-deoxy-D-xylulose 5-phosphate: step 3/6. Catalyzes the phosphorylation of the position 2 hydroxy group of 4-diphosphocytidyl-2C-methyl-D-erythritol. The chain is 4-diphosphocytidyl-2-C-methyl-D-erythritol kinase from Francisella tularensis subsp. novicida (strain U112).